Here is a 60-residue protein sequence, read N- to C-terminus: Cytotoxin 5 (60 aa).

Disulfide bonds link Cys-3/Cys-21, Cys-14/Cys-38, Cys-42/Cys-53, and Cys-54/Cys-59.

This sequence belongs to the three-finger toxin family. Short-chain subfamily. Type IA cytotoxin sub-subfamily. Monomer in solution; Homodimer and oligomer in the presence of negatively charged lipids forming a pore with a size ranging between 20 and 30 Angstroms. Expressed by the venom gland.

Its subcellular location is the secreted. It localises to the target cell membrane. In terms of biological role, shows cytolytic activity on many different cells by forming pore in lipid membranes. In vivo, increases heart rate or kills the animal by cardiac arrest. In addition, it binds to heparin with high affinity, interacts with Kv channel-interacting protein 1 (KCNIP1) in a calcium-independent manner, and binds to integrin alpha-V/beta-3 (ITGAV/ITGB3) with moderate affinity. The sequence is that of Cytotoxin 5 from Naja kaouthia (Monocled cobra).